Reading from the N-terminus, the 94-residue chain is Large ribosomal subunit protein bL27 (94 aa).

The propeptide occupies 1-9; it reads MLKLNLQFF. The segment at 13-32 is disordered; that stretch reads KGLGSTKNGRDSESKRLGAK. The span at 20–32 shows a compositional bias: basic and acidic residues; sequence NGRDSESKRLGAK.

It belongs to the bacterial ribosomal protein bL27 family. In terms of processing, the N-terminus is cleaved by ribosomal processing cysteine protease Prp.

This Staphylococcus saprophyticus subsp. saprophyticus (strain ATCC 15305 / DSM 20229 / NCIMB 8711 / NCTC 7292 / S-41) protein is Large ribosomal subunit protein bL27.